The following is a 156-amino-acid chain: Putative pre-16S rRNA nuclease (156 aa).

Belongs to the YqgF nuclease family.

It localises to the cytoplasm. Its function is as follows. Could be a nuclease involved in processing of the 5'-end of pre-16S rRNA. The sequence is that of Putative pre-16S rRNA nuclease from Ehrlichia ruminantium (strain Welgevonden).